Here is a 163-residue protein sequence, read N- to C-terminus: I-Kappa-B like protein N3 (163 aa).

2 ANK repeats span residues 62–95 (LGDT…NLNT) and 100–130 (NGDT…NLQT).

The protein belongs to the polydnaviridae I-Kappa-B like protein family.

Its function is as follows. Suppresses the host immune response through NF-kappa-B inactivation. Possesses ankyrin repeat domains required for NF-kappa-B binding but lacks the regulatory regions required for dissociation from NF-kappa-B and degradation. Therefore, prevents host NF-kappa-B release and subsequent activation. The sequence is that of I-Kappa-B like protein N3 (N6) from Microplitis demolitor (Parasitoid wasp).